The following is a 128-amino-acid chain: Large ribosomal subunit protein bL12c (128 aa).

The interval 103-128 (QEGLGKDAAEDAKKQIEDAGGKVSLT) is disordered. Residues 106–122 (LGKDAAEDAKKQIEDAG) are compositionally biased toward basic and acidic residues.

It belongs to the bacterial ribosomal protein bL12 family. Homodimer. Part of the ribosomal stalk of the 50S ribosomal subunit. Forms a multimeric L10(L12)X complex, where L10 forms an elongated spine to which 2 to 4 L12 dimers bind in a sequential fashion. Binds GTP-bound translation factors.

It is found in the plastid. It localises to the chloroplast. Forms part of the ribosomal stalk which helps the ribosome interact with GTP-bound translation factors. Is thus essential for accurate translation. This chain is Large ribosomal subunit protein bL12c, found in Thalassiosira pseudonana (Marine diatom).